The sequence spans 1083 residues: Alpha-mannosidase (1083 aa).

An N-acetylserine modification is found at Ser-2. Residues His-298, Asp-300, Asp-411, and His-626 each coordinate Zn(2+). The active-site Nucleophile is Asp-411.

The protein belongs to the glycosyl hydrolase 38 family. Composed of isoforms with three constituent polypeptides described as [(107 kDa)-n (73 kDa)-(6-n) (31 kDa)-(6-n)], where n is 0-6. The 73 kDa and the 31 kDa polypeptides may be proteolytic derivatives of the 107 kDa polypeptide in the vacuole. Oligomerizes in the cytoplasm and retains its oligomeric form during import into the vacuole. Requires Zn(2+) as cofactor. The N-terminus is blocked.

The protein resides in the vacuole. It catalyses the reaction Hydrolysis of terminal, non-reducing alpha-D-mannose residues in alpha-D-mannosides.. In terms of biological role, degrades free oligosaccharides in the vacuole. The polypeptide is Alpha-mannosidase (AMS1) (Saccharomyces cerevisiae (strain ATCC 204508 / S288c) (Baker's yeast)).